The chain runs to 132 residues: Transcriptional regulator MraZ (132 aa).

SpoVT-AbrB domains are found at residues 5 to 47 (TYEH…SKDD) and 76 to 119 (TVEI…SKNK).

Belongs to the MraZ family. Forms oligomers.

Its subcellular location is the cytoplasm. It localises to the nucleoid. The protein is Transcriptional regulator MraZ of Mycoplasma capricolum subsp. capricolum (strain California kid / ATCC 27343 / NCTC 10154).